The sequence spans 135 residues: Ribonuclease P protein component (135 aa).

This sequence belongs to the RnpA family. In terms of assembly, consists of a catalytic RNA component (M1 or rnpB) and a protein subunit.

It catalyses the reaction Endonucleolytic cleavage of RNA, removing 5'-extranucleotides from tRNA precursor.. RNaseP catalyzes the removal of the 5'-leader sequence from pre-tRNA to produce the mature 5'-terminus. It can also cleave other RNA substrates such as 4.5S RNA. The protein component plays an auxiliary but essential role in vivo by binding to the 5'-leader sequence and broadening the substrate specificity of the ribozyme. This Xylella fastidiosa (strain 9a5c) protein is Ribonuclease P protein component.